Consider the following 689-residue polypeptide: Glycine--tRNA ligase beta subunit (689 aa).

This sequence belongs to the class-II aminoacyl-tRNA synthetase family. As to quaternary structure, tetramer of two alpha and two beta subunits.

The protein resides in the cytoplasm. The enzyme catalyses tRNA(Gly) + glycine + ATP = glycyl-tRNA(Gly) + AMP + diphosphate. This is Glycine--tRNA ligase beta subunit from Escherichia coli O139:H28 (strain E24377A / ETEC).